Consider the following 443-residue polypeptide: Thymidine phosphorylase (443 aa).

The protein belongs to the thymidine/pyrimidine-nucleoside phosphorylase family. In terms of assembly, homodimer.

The enzyme catalyses thymidine + phosphate = 2-deoxy-alpha-D-ribose 1-phosphate + thymine. It functions in the pathway pyrimidine metabolism; dTMP biosynthesis via salvage pathway; dTMP from thymine: step 1/2. Its function is as follows. The enzymes which catalyze the reversible phosphorolysis of pyrimidine nucleosides are involved in the degradation of these compounds and in their utilization as carbon and energy sources, or in the rescue of pyrimidine bases for nucleotide synthesis. This chain is Thymidine phosphorylase, found in Shewanella baltica (strain OS195).